Reading from the N-terminus, the 389-residue chain is 23S rRNA (uracil(747)-C(5))-methyltransferase RlmC (389 aa).

Cys12, Cys20, Cys23, and Cys99 together coordinate [4Fe-4S] cluster. Residues Gln224, Phe253, Glu274, and Asn321 each contribute to the S-adenosyl-L-methionine site. Cys348 serves as the catalytic Nucleophile.

This sequence belongs to the class I-like SAM-binding methyltransferase superfamily. RNA M5U methyltransferase family. RlmC subfamily.

The catalysed reaction is uridine(747) in 23S rRNA + S-adenosyl-L-methionine = 5-methyluridine(747) in 23S rRNA + S-adenosyl-L-homocysteine + H(+). Its function is as follows. Catalyzes the formation of 5-methyl-uridine at position 747 (m5U747) in 23S rRNA. The chain is 23S rRNA (uracil(747)-C(5))-methyltransferase RlmC from Shewanella sp. (strain W3-18-1).